Consider the following 428-residue polypeptide: D-alanine--D-alanine ligase (428 aa).

The region spanning 205 to 424 (KVVLDAAGIP…YTELITRLIE (220 aa)) is the ATP-grasp domain. 237–299 (DAGLTYPLFV…EQGIDGREIE (63 aa)) is a binding site for ATP. Mg(2+) contacts are provided by Asp-378, Glu-391, and Asn-393.

Belongs to the D-alanine--D-alanine ligase family. Mg(2+) is required as a cofactor. Requires Mn(2+) as cofactor.

Its subcellular location is the cytoplasm. It catalyses the reaction 2 D-alanine + ATP = D-alanyl-D-alanine + ADP + phosphate + H(+). The protein operates within cell wall biogenesis; peptidoglycan biosynthesis. Functionally, cell wall formation. The sequence is that of D-alanine--D-alanine ligase from Bifidobacterium longum (strain NCC 2705).